The sequence spans 563 residues: Arginine--tRNA ligase (563 aa).

Positions 121–131 match the 'HIGH' region motif; the sequence is PNIAKPMSMGH.

It belongs to the class-I aminoacyl-tRNA synthetase family. As to quaternary structure, monomer.

The protein resides in the cytoplasm. The enzyme catalyses tRNA(Arg) + L-arginine + ATP = L-arginyl-tRNA(Arg) + AMP + diphosphate. This chain is Arginine--tRNA ligase, found in Leuconostoc mesenteroides subsp. mesenteroides (strain ATCC 8293 / DSM 20343 / BCRC 11652 / CCM 1803 / JCM 6124 / NCDO 523 / NBRC 100496 / NCIMB 8023 / NCTC 12954 / NRRL B-1118 / 37Y).